The primary structure comprises 722 residues: Catalase B (722 aa).

The first 15 residues, 1–15, serve as a signal peptide directing secretion; the sequence is MRALGLVGLVGVANA. Residues H100 and N173 contribute to the active site. Y388 provides a ligand contact to heme.

This sequence belongs to the catalase family. It depends on heme as a cofactor.

The protein resides in the secreted. The catalysed reaction is 2 H2O2 = O2 + 2 H2O. Occurs in almost all aerobically respiring organisms and serves to protect cells from the toxic effects of hydrogen peroxide. In Emericella nidulans (strain FGSC A4 / ATCC 38163 / CBS 112.46 / NRRL 194 / M139) (Aspergillus nidulans), this protein is Catalase B (catB).